The primary structure comprises 275 residues: Large ribosomal subunit protein uL2 (275 aa).

Disordered stretches follow at residues 36–55 and 223–275; these read PKKR…RHKG and VVMN…RHAR.

The protein belongs to the universal ribosomal protein uL2 family. Part of the 50S ribosomal subunit. Forms a bridge to the 30S subunit in the 70S ribosome.

One of the primary rRNA binding proteins. Required for association of the 30S and 50S subunits to form the 70S ribosome, for tRNA binding and peptide bond formation. It has been suggested to have peptidyltransferase activity; this is somewhat controversial. Makes several contacts with the 16S rRNA in the 70S ribosome. This Thiobacillus denitrificans (strain ATCC 25259 / T1) protein is Large ribosomal subunit protein uL2.